The following is a 128-amino-acid chain: Large ribosomal subunit protein bL17 (128 aa).

This sequence belongs to the bacterial ribosomal protein bL17 family. Part of the 50S ribosomal subunit. Contacts protein L32.

In Streptococcus suis (strain 98HAH33), this protein is Large ribosomal subunit protein bL17.